The sequence spans 654 residues: MFFSLLLMLGLTEAEKIKICLQKQVNSSFSLHNGFGGNLYATEEKRMFELVKPKAGASVLNQSTWIGFGDSRTDQSNSAFPRSLMSAKTADKFRSLSGGSLMLSMFGPPGKVDYLYQGCGKHKVFYEGVNWSPHAAIDCYRKNWTDIKLNFQKSIYELASQSHCMSLVNALDKTIPLQVTKGVAKNCNNSFLKNPALYTQEVKPLEQICGEENLAFFTLPTQFGTYECKLHLVASCYFIYDSKEVYNKRGCGNYFQVIYDSSGKVVGGLDNRVSPYTGNSGDTPTMQCDMLQLKPGRYSVRSSPRFLLMPERSYCFDMKEKGPVTAVQSIWGKGRKSDYAVDQACLSTPGCMLIQKQKPYIGEADDHHGDQEMRELLSGLDYEARCISQSGWVNETSPFTEEYLLPPKFGRCPLAAKEESIPKIPDGLLIPTSGTDTTVTKPKSRIFGIDDLIIGLLFVAIVEAGIGGYLLGSRKESGGGVTKESAEKGFEKIGNDIQILRSSTNIAIEKLNDRISHDEQAIRDLTLEIENARSEALLGELGIIRALLVGNISIGLQESLWELASEITNRAGDLAVEVSPGCWIIDNNICDQSCQNFIFKFNETAPVPTIPPLDTKIDLQSDPFYWGSSLGLAITAANLMAALVISGIAICRTK.

A signal peptide spans 1 to 14 (MFFSLLLMLGLTEA). The interval 15–40 (EKIKICLQKQVNSSFSLHNGFGGNLY) is fusion domain-1. At 15-629 (EKIKICLQKQ…QSDPFYWGSS (615 aa)) the chain is on the extracellular side. 4 disulfide bridges follow: Cys-20–Cys-582, Cys-209–Cys-251, Cys-228–Cys-315, and Cys-236–Cys-288. N-linked (GlcNAc...) asparagine; by host glycans are attached at residues Asn-26 and Asn-61. The esterase domain-1 stretch occupies residues 41–157 (ATEEKRMFEL…KLNFQKSIYE (117 aa)). Catalysis depends on Ser-71, which acts as the Nucleophile. Residues Asn-143 and Asn-188 are each glycosylated (N-linked (GlcNAc...) asparagine; by host). An N-acetyl-9-O-acetylneuraminic acid binding region spans residues 157 to 309 (ELASQSHCMS…VRSSPRFLLM (153 aa)). Residues 309-363 (MPERSYCFDMKEKGPVTAVQSIWGKGRKSDYAVDQACLSTPGCMLIQKQKPYIGE) are esterase domain-2. The segment at 364-654 (ADDHHGDQEM…ISGIAICRTK (291 aa)) is fusion domain-2. Catalysis depends on charge relay system residues Asp-365 and His-368. N-linked (GlcNAc...) asparagine; by host glycans are attached at residues Asn-394, Asn-551, and Asn-602. Residues 630-650 (LGLAITAANLMAALVISGIAI) traverse the membrane as a helical segment. The Cytoplasmic segment spans residues 651–654 (CRTK).

It belongs to the influenza viruses hemagglutinin family. As to quaternary structure, homotrimer of disulfide-linked HEF1-HEF2. In terms of processing, in natural infection, inactive HEF is matured into HEF1 and HEF2 outside the cell by one or more trypsin-like, arginine-specific endoprotease.

It localises to the virion membrane. Its subcellular location is the host cell membrane. It carries out the reaction N-acetyl-9-O-acetylneuraminate + H2O = N-acetylneuraminate + acetate + H(+). The enzyme catalyses N-acetyl-4-O-acetylneuraminate + H2O = N-acetylneuraminate + acetate + H(+). Binds to the N-acetyl-9-O-acetylneuraminic acid residues on the cell surface, bringing about the attachment of the virus particle to the cell. Plays a major role in the determination of host range restriction and virulence. Class I viral fusion protein. Responsible for penetration of the virus into the cell cytoplasm by mediating the fusion of the membrane of the endocytosed virus particle with the endosomal membrane. Low pH in endosomes induce an irreversible conformational change in HEF2, releasing the fusion hydrophobic peptide. Several trimers are required to form a competent fusion pore. Displays a receptor-destroying activity which is a neuraminidate-O-acetyl esterase. This activity cleaves off any receptor on the cell surface, which would otherwise prevent virions release. These cleavages prevent self-aggregation and ensure the efficient spread of the progeny virus from cell to cell. The protein is Hemagglutinin-esterase-fusion glycoprotein of Influenza C virus (strain C/California/1978).